Consider the following 287-residue polypeptide: Small ribosomal subunit biogenesis GTPase RsgA (287 aa).

One can recognise a CP-type G domain in the interval 61–218; it reads ISQLKRPAVA…MVDTPGFSSL (158 aa). Residues 110 to 113 and 161 to 169 contribute to the GTP site; these read NKLD and GPSGVGKST. C242, C247, H249, and C255 together coordinate Zn(2+).

This sequence belongs to the TRAFAC class YlqF/YawG GTPase family. RsgA subfamily. As to quaternary structure, monomer. Associates with 30S ribosomal subunit, binds 16S rRNA. Requires Zn(2+) as cofactor.

It localises to the cytoplasm. One of several proteins that assist in the late maturation steps of the functional core of the 30S ribosomal subunit. Helps release RbfA from mature subunits. May play a role in the assembly of ribosomal proteins into the subunit. Circularly permuted GTPase that catalyzes slow GTP hydrolysis, GTPase activity is stimulated by the 30S ribosomal subunit. This Clostridium kluyveri (strain NBRC 12016) protein is Small ribosomal subunit biogenesis GTPase RsgA.